The sequence spans 103 residues: Small ribosomal subunit protein uS10 (103 aa).

This sequence belongs to the universal ribosomal protein uS10 family. In terms of assembly, part of the 30S ribosomal subunit.

Functionally, involved in the binding of tRNA to the ribosomes. This is Small ribosomal subunit protein uS10 from Acinetobacter baumannii (strain AB307-0294).